Here is a 244-residue protein sequence, read N- to C-terminus: Reticulon-like protein B7 (244 aa).

In terms of domain architecture, Reticulon spans 70 to 244; the sequence is PADVLLWRDK…EAKFLSKIPH (175 aa). 3 helical membrane passes run 80–100, 103–123, and 172–192; these read KVTLGLLSAVTVIWLLFGFGG, LLTSLCRGSILFLLLSFLWSN, and FVMAVIGLWLVSVIGNWFSFL.

The protein resides in the endoplasmic reticulum membrane. In Arabidopsis thaliana (Mouse-ear cress), this protein is Reticulon-like protein B7 (RTNLB7).